The sequence spans 367 residues: Peptide chain release factor 2 (367 aa).

Glutamine 254 carries the N5-methylglutamine modification.

Belongs to the prokaryotic/mitochondrial release factor family. In terms of processing, methylated by PrmC. Methylation increases the termination efficiency of RF2.

The protein localises to the cytoplasm. In terms of biological role, peptide chain release factor 2 directs the termination of translation in response to the peptide chain termination codons UGA and UAA. The chain is Peptide chain release factor 2 from Neisseria meningitidis serogroup C / serotype 2a (strain ATCC 700532 / DSM 15464 / FAM18).